We begin with the raw amino-acid sequence, 732 residues long: E3 ubiquitin-protein ligase DCST1 (732 aa).

Residues 1-46 lie on the Cytoplasmic side of the membrane; that stretch reads MAFLSSTLHSLGIFEKISRIKEVLKNRLLDLTKRRDQAREQQRKRP. The chain crosses the membrane as a helical span at residues 47-67; it reads HTIIQGLLLWSLPVSWIRFLW. At 68–76 the chain is on the extracellular side; that stretch reads RQPGEFPVT. A helical membrane pass occupies residues 77-97; it reads AFLLGAGTGGLLAIGLFQLLV. Over 98 to 107 the chain is Cytoplasmic; it reads NPMNIYEEQK. A helical transmembrane segment spans residues 108-128; it reads VVALYCLASLGAIGWGTSPHI. The Extracellular portion of the chain corresponds to 129–394; that stretch reads RCASLLLVPK…VRDYVRQQET (266 aa). N-linked (GlcNAc...) asparagine glycosylation is found at asparagine 184, asparagine 217, asparagine 346, and asparagine 374. A helical membrane pass occupies residues 395–415; the sequence is YLQWAMGLLHVLLSCTFLLVF. Residues 416–489 are Cytoplasmic-facing; sequence HSAFSYMDHY…RYVIRELLET (74 aa). A helical transmembrane segment spans residues 490-510; sequence LPIVLLLLVLCAIDWALYSVF. At 511–576 the chain is on the extracellular side; sequence DTIRQHSFVQ…PQPISLNARD (66 aa). Asparagine 551 is a glycosylation site (N-linked (GlcNAc...) asparagine). The chain crosses the membrane as a helical span at residues 577–597; the sequence is YFKASLPTLLLVCLCLAQAFG. At 598-732 the chain is on the cytoplasmic side; it reads YRLRRVIAAF…DSNDDAVYGD (135 aa). An RING-type; degenerate zinc finger spans residues 672 to 711; sequence CVVCQAMETPDSYVCPTPDCKALYCRSCWDDMQRLCPVCT.

Interacts with STAT2; the interaction results in STAT2 'Lys-48'-linked ubiquitination leading to its proteasomal degradation. Interacts with DCST2. As to expression, expressed in testis.

Its subcellular location is the cell membrane. The protein resides in the cytoplasmic vesicle. It localises to the secretory vesicle. The protein localises to the acrosome membrane. It carries out the reaction S-ubiquitinyl-[E2 ubiquitin-conjugating enzyme]-L-cysteine + [acceptor protein]-L-lysine = [E2 ubiquitin-conjugating enzyme]-L-cysteine + N(6)-ubiquitinyl-[acceptor protein]-L-lysine.. It functions in the pathway protein modification; protein ubiquitination. E3 ubiquitin-protein ligase which mediates 'Lys-48'-linked ubiquitination of STAT2 and induces its proteasomal degradation thereby negatively regulating type-I-interferon signaling. Functionally, essential sperm cell-surface protein required for sperm-egg fusion and fertilization. The chain is E3 ubiquitin-protein ligase DCST1 (Dcst1) from Mus musculus (Mouse).